The chain runs to 280 residues: Putative pyruvate, phosphate dikinase regulatory protein (280 aa).

149–156 provides a ligand contact to ADP; sequence GVSRSSKT.

This sequence belongs to the pyruvate, phosphate/water dikinase regulatory protein family. PDRP subfamily.

It catalyses the reaction N(tele)-phospho-L-histidyl/L-threonyl-[pyruvate, phosphate dikinase] + ADP = N(tele)-phospho-L-histidyl/O-phospho-L-threonyl-[pyruvate, phosphate dikinase] + AMP + H(+). It carries out the reaction N(tele)-phospho-L-histidyl/O-phospho-L-threonyl-[pyruvate, phosphate dikinase] + phosphate + H(+) = N(tele)-phospho-L-histidyl/L-threonyl-[pyruvate, phosphate dikinase] + diphosphate. Its function is as follows. Bifunctional serine/threonine kinase and phosphorylase involved in the regulation of the pyruvate, phosphate dikinase (PPDK) by catalyzing its phosphorylation/dephosphorylation. This is Putative pyruvate, phosphate dikinase regulatory protein from Novosphingobium aromaticivorans (strain ATCC 700278 / DSM 12444 / CCUG 56034 / CIP 105152 / NBRC 16084 / F199).